Consider the following 157-residue polypeptide: 2-C-methyl-D-erythritol 2,4-cyclodiphosphate synthase (157 aa).

Residues D8 and H10 each contribute to the a divalent metal cation site. Residues 8–10 (DVH) and 34–35 (HS) contribute to the 4-CDP-2-C-methyl-D-erythritol 2-phosphate site. H42 lines the a divalent metal cation pocket. 4-CDP-2-C-methyl-D-erythritol 2-phosphate contacts are provided by residues 56–58 (DIG), 61–65 (FPDTD), 100–106 (AQAPKMA), 132–135 (TTTE), F139, and R142.

Belongs to the IspF family. Homotrimer. A divalent metal cation serves as cofactor.

It catalyses the reaction 4-CDP-2-C-methyl-D-erythritol 2-phosphate = 2-C-methyl-D-erythritol 2,4-cyclic diphosphate + CMP. The protein operates within isoprenoid biosynthesis; isopentenyl diphosphate biosynthesis via DXP pathway; isopentenyl diphosphate from 1-deoxy-D-xylulose 5-phosphate: step 4/6. Involved in the biosynthesis of isopentenyl diphosphate (IPP) and dimethylallyl diphosphate (DMAPP), two major building blocks of isoprenoid compounds. Catalyzes the conversion of 4-diphosphocytidyl-2-C-methyl-D-erythritol 2-phosphate (CDP-ME2P) to 2-C-methyl-D-erythritol 2,4-cyclodiphosphate (ME-CPP) with a corresponding release of cytidine 5-monophosphate (CMP). The protein is 2-C-methyl-D-erythritol 2,4-cyclodiphosphate synthase of Pseudomonas fluorescens (strain ATCC BAA-477 / NRRL B-23932 / Pf-5).